We begin with the raw amino-acid sequence, 136 residues long: Putative nickel-responsive regulator (136 aa).

Positions 76, 87, 89, and 95 each coordinate Ni(2+).

It belongs to the transcriptional regulatory CopG/NikR family. Requires Ni(2+) as cofactor.

Functionally, transcriptional regulator. This Desulfotalea psychrophila (strain LSv54 / DSM 12343) protein is Putative nickel-responsive regulator.